The primary structure comprises 296 residues: Transcription factor MYB72 (296 aa).

2 HTH myb-type domains span residues 11 to 63 and 64 to 118; these read KNKV…INYL and RPDV…KKRL. DNA-binding regions (H-T-H motif) lie at residues 39–63 and 91–114; these read WRSL…INYL and WSKI…NTHL. The disordered stretch occupies residues 118–144; the sequence is LTPSSSSSSLSSTHDQSTKADHDKNCD. The segment covering 133-144 has biased composition (basic and acidic residues); the sequence is QSTKADHDKNCD.

In terms of assembly, interacts with EIL3.

The protein resides in the nucleus. In terms of biological role, involved in metal ions homeostasis, including iron ions (Fe) acquisition, via the regulation of NAS4 and NAS2 genes expression. Necessary for plant survival in alkaline soil where iron availability is greatly restricted. Involved in the up-regulation of several biosynthesis genes of secondary metabolites involved in iron uptake under conditions of iron deficiency. Triggers tolerance to nickel (Ni) and zinc (Zn) ions. Required in the roots during early signaling steps of rhizobacteria-mediated (e.g. P.fluorescens WCS417r) and beneficial fungi-mediated (e.g. T.asperellum T34) broad-spectrum induced systemic resistance (ISR) against several pathogens (e.g. P.syringae pv tomato, H.parasitica, P.cucumerina, A.brassicicola and B.cinerea) and implying enhanced callose deposition. Required for the induction of some genes (e.g. BGLU42) upon rhizobacteria-mediated ISR. In Arabidopsis thaliana (Mouse-ear cress), this protein is Transcription factor MYB72.